A 262-amino-acid chain; its full sequence is Putative ankyrin repeat protein R848 (262 aa).

7 ANK repeats span residues 8 to 37 (SNDY…NVTH), 38 to 67 (DNNY…DIRD), 68 to 97 (CRDY…NIRA), 99 to 127 (DDYA…NFRA), 128 to 157 (DNDY…DIRA), 159 to 187 (DDYA…DFRS), and 189 to 217 (NNAS…DVNT).

The polypeptide is Putative ankyrin repeat protein R848 (Acanthamoeba polyphaga (Amoeba)).